Consider the following 144-residue polypeptide: Large ribosomal subunit protein uL15 (144 aa).

The interval 1-55 (MQLNELKPVAGSRFKRLRKGRGLSSGHGFTSGRGTKGQKAHGKTRLGFEGGQMPL) is disordered. Residues 23–35 (LSSGHGFTSGRGT) are compositionally biased toward gly residues.

Belongs to the universal ribosomal protein uL15 family. In terms of assembly, part of the 50S ribosomal subunit.

Its function is as follows. Binds to the 23S rRNA. In Limosilactobacillus fermentum (strain NBRC 3956 / LMG 18251) (Lactobacillus fermentum), this protein is Large ribosomal subunit protein uL15.